We begin with the raw amino-acid sequence, 254 residues long: Ribosomal RNA small subunit methyltransferase J (254 aa).

S-adenosyl-L-methionine contacts are provided by residues 107 to 108, 123 to 124, and aspartate 177; these read RD and ER.

The protein belongs to the methyltransferase superfamily. RsmJ family.

The protein resides in the cytoplasm. The enzyme catalyses guanosine(1516) in 16S rRNA + S-adenosyl-L-methionine = N(2)-methylguanosine(1516) in 16S rRNA + S-adenosyl-L-homocysteine + H(+). In terms of biological role, specifically methylates the guanosine in position 1516 of 16S rRNA. This chain is Ribosomal RNA small subunit methyltransferase J, found in Histophilus somni (strain 2336) (Haemophilus somnus).